The primary structure comprises 535 residues: Flavin-containing monooxygenase iboF (535 aa).

Positions 1–24 are cleaved as a signal peptide; sequence MFSLRPTALVSLSVVLFSIQETLS. An FAD-binding site is contributed by 60–65; sequence GAGPSG. Residues Asn134, Asn243, and Asn300 are each glycosylated (N-linked (GlcNAc...) asparagine). 307 to 312 contributes to the NADP(+) binding site; the sequence is GAAASG. N-linked (GlcNAc...) asparagine glycosylation is found at Asn356, Asn382, and Asn410.

This sequence belongs to the FMO family. FAD serves as cofactor.

It functions in the pathway secondary metabolite biosynthesis. Its function is as follows. Flavin-containing monooxygenase; part of the gene cluster that mediates the biosynthesis of the psychoactive metabolites ibotenic acid and muscimol. The first committed step is glutamate hydroxylation by the 2-oxoglutarate-dependent dioxygenase iboH, and the last step is decarboxylation of ibotenic acid to muscimol by the decarboxylase iboD. The order of the intermediate reactions is somewhat ambiguous. IboA likely activates the carboxylic acid at position 5 to introduce an amide bond, and the flavin monooxygenase iboF generates the N-O bond. There are several options for the latter step. One option is that iboF directly hydroxylates the amide nitrogen formed by iboA to produce a hydroxamic acid species. Another option is that iboF hydroxylates an external N-containing compound, whose resulting N-O bond is subsequently introduced into the hydroxyglutamate scaffold. The paralogous PLP-dependent cystathionine gamma-synthase-like enzymes iboG1 and iboG2 are likely involved in substitution of the OH group at position 3 by the O-N moiety. The first cyclic intermediate is most probably tricholomic acid which is likely desaturated to ibotenic acid by the cytochrome P450 monooxygenase iboC. This is Flavin-containing monooxygenase iboF from Amanita muscaria (strain Koide BX008).